Reading from the N-terminus, the 313-residue chain is CRISPR-associated endonuclease Cas1 1 (313 aa).

Residues Glu-144, His-211, and Asp-224 each contribute to the Mn(2+) site. The disordered stretch occupies residues 288–313; it reads PPLDAPEAVDPVIPPEEPSGDDGHRG.

It belongs to the CRISPR-associated endonuclease Cas1 family. As to quaternary structure, homodimer, forms a heterotetramer with a Cas2 homodimer. It depends on Mg(2+) as a cofactor. Mn(2+) serves as cofactor.

Functionally, CRISPR (clustered regularly interspaced short palindromic repeat), is an adaptive immune system that provides protection against mobile genetic elements (viruses, transposable elements and conjugative plasmids). CRISPR clusters contain spacers, sequences complementary to antecedent mobile elements, and target invading nucleic acids. CRISPR clusters are transcribed and processed into CRISPR RNA (crRNA). Acts as a dsDNA endonuclease. Involved in the integration of spacer DNA into the CRISPR cassette. The protein is CRISPR-associated endonuclease Cas1 1 of Rhodospirillum rubrum (strain ATCC 11170 / ATH 1.1.1 / DSM 467 / LMG 4362 / NCIMB 8255 / S1).